Here is a 245-residue protein sequence, read N- to C-terminus: DNA repair protein RecO (245 aa).

This sequence belongs to the RecO family.

Its function is as follows. Involved in DNA repair and RecF pathway recombination. The polypeptide is DNA repair protein RecO (Klebsiella pneumoniae subsp. pneumoniae (strain ATCC 700721 / MGH 78578)).